Here is a 251-residue protein sequence, read N- to C-terminus: Pyrroloquinoline-quinone synthase (251 aa).

The protein belongs to the PqqC family.

It carries out the reaction 6-(2-amino-2-carboxyethyl)-7,8-dioxo-1,2,3,4,7,8-hexahydroquinoline-2,4-dicarboxylate + 3 O2 = pyrroloquinoline quinone + 2 H2O2 + 2 H2O + H(+). It functions in the pathway cofactor biosynthesis; pyrroloquinoline quinone biosynthesis. Ring cyclization and eight-electron oxidation of 3a-(2-amino-2-carboxyethyl)-4,5-dioxo-4,5,6,7,8,9-hexahydroquinoline-7,9-dicarboxylic-acid to PQQ. This chain is Pyrroloquinoline-quinone synthase, found in Klebsiella pneumoniae subsp. pneumoniae (strain ATCC 700721 / MGH 78578).